The following is a 285-amino-acid chain: Acetyl-coenzyme A carboxylase carboxyl transferase subunit beta (285 aa).

In terms of domain architecture, CoA carboxyltransferase N-terminal spans 29-285 (IMTKCPNCKK…ILKIHQEVSN (257 aa)). Residues C33, C36, C52, and C55 each contribute to the Zn(2+) site. The C4-type zinc finger occupies 33 to 55 (CPNCKKIMYTKELNENLNVCFNC).

It belongs to the AccD/PCCB family. Acetyl-CoA carboxylase is a heterohexamer composed of biotin carboxyl carrier protein (AccB), biotin carboxylase (AccC) and two subunits each of ACCase subunit alpha (AccA) and ACCase subunit beta (AccD). Zn(2+) serves as cofactor.

The protein localises to the cytoplasm. It carries out the reaction N(6)-carboxybiotinyl-L-lysyl-[protein] + acetyl-CoA = N(6)-biotinyl-L-lysyl-[protein] + malonyl-CoA. It functions in the pathway lipid metabolism; malonyl-CoA biosynthesis; malonyl-CoA from acetyl-CoA: step 1/1. Its function is as follows. Component of the acetyl coenzyme A carboxylase (ACC) complex. Biotin carboxylase (BC) catalyzes the carboxylation of biotin on its carrier protein (BCCP) and then the CO(2) group is transferred by the transcarboxylase to acetyl-CoA to form malonyl-CoA. The chain is Acetyl-coenzyme A carboxylase carboxyl transferase subunit beta from Staphylococcus epidermidis (strain ATCC 35984 / DSM 28319 / BCRC 17069 / CCUG 31568 / BM 3577 / RP62A).